Consider the following 148-residue polypeptide: Deoxyuridine 5'-triphosphate nucleotidohydrolase (148 aa).

Residues Arg-65–Gly-67, Asn-78, Thr-82–Asp-84, and Lys-92 contribute to the substrate site.

It belongs to the dUTPase family. The cofactor is Mg(2+).

It carries out the reaction dUTP + H2O = dUMP + diphosphate + H(+). It functions in the pathway pyrimidine metabolism; dUMP biosynthesis; dUMP from dCTP (dUTP route): step 2/2. Its function is as follows. This enzyme is involved in nucleotide metabolism: it produces dUMP, the immediate precursor of thymidine nucleotides and it decreases the intracellular concentration of dUTP so that uracil cannot be incorporated into DNA. This chain is Deoxyuridine 5'-triphosphate nucleotidohydrolase, found in Chlorobium phaeovibrioides (strain DSM 265 / 1930) (Prosthecochloris vibrioformis (strain DSM 265)).